We begin with the raw amino-acid sequence, 61 residues long: Photosystem II reaction center protein K (61 aa).

The propeptide occupies 1–24 (MLNIFNLICICFNSALFSSSFLFA). Residues 36–56 (IVDFMPVIPVLFFLLAFVWQA) form a helical membrane-spanning segment.

The protein belongs to the PsbK family. In terms of assembly, PSII is composed of 1 copy each of membrane proteins PsbA, PsbB, PsbC, PsbD, PsbE, PsbF, PsbH, PsbI, PsbJ, PsbK, PsbL, PsbM, PsbT, PsbX, PsbY, PsbZ, Psb30/Ycf12, at least 3 peripheral proteins of the oxygen-evolving complex and a large number of cofactors. It forms dimeric complexes.

The protein localises to the plastid. It is found in the chloroplast thylakoid membrane. Functionally, one of the components of the core complex of photosystem II (PSII). PSII is a light-driven water:plastoquinone oxidoreductase that uses light energy to abstract electrons from H(2)O, generating O(2) and a proton gradient subsequently used for ATP formation. It consists of a core antenna complex that captures photons, and an electron transfer chain that converts photonic excitation into a charge separation. The polypeptide is Photosystem II reaction center protein K (Gossypium barbadense (Sea Island cotton)).